Consider the following 83-residue polypeptide: Alpha-elapitoxin-Ppr1 (83 aa).

A signal peptide spans Met-1 to Thr-21. Intrachain disulfides connect Cys-24–Cys-45, Cys-38–Cys-62, Cys-64–Cys-75, and Cys-76–Cys-81.

The protein belongs to the three-finger toxin family. Short-chain subfamily. Type I alpha-neurotoxin sub-subfamily. In terms of tissue distribution, expressed by the venom gland.

The protein resides in the secreted. Functionally, bird-specific neurotoxin (tested on chicken) that acts as a pseudo-irreversible antagonist at the nicotinic acetylcholine receptor (nAChR) of the skeletal neuromuscular junction. Has no significant effect on the electrically-induced twitches of the rat isolated phrenic nerve-diaphragm preparation. The chain is Alpha-elapitoxin-Ppr1 from Pseudechis porphyriacus (Red-bellied black snake).